Here is a 393-residue protein sequence, read N- to C-terminus: Cytochrome b (393 aa).

Transmembrane regions (helical) follow at residues 33-53, 77-98, 113-133, and 178-198; these read FGSLLGLCLMIQILTGFFLAM, WFLRNTHANGASILFICMYLHM, WNIGVIMFFLMMTTAFVGYVL, and FFAIHFTLPFITVGLTMLHLL. Heme b is bound by residues histidine 83 and histidine 97. Heme b contacts are provided by histidine 182 and histidine 196. Residue histidine 201 coordinates a ubiquinone. Helical transmembrane passes span 226–246, 288–308, 320–340, and 347–367; these read YKDVLGFLLLLAALTALALFA, LGGVAALALSILALMVLPFIH, LSQLVFWLFVANIAILTWIGG, and FIIIGRIASVSYFTLILILMP.

Belongs to the cytochrome b family. In terms of assembly, the cytochrome bc1 complex contains 3 respiratory subunits (MT-CYB, CYC1 and UQCRFS1), 2 core proteins (UQCRC1 and UQCRC2) and probably 6 low-molecular weight proteins. It depends on heme b as a cofactor.

The protein localises to the mitochondrion inner membrane. In terms of biological role, component of the ubiquinol-cytochrome c reductase complex (complex III or cytochrome b-c1 complex) that is part of the mitochondrial respiratory chain. The b-c1 complex mediates electron transfer from ubiquinol to cytochrome c. Contributes to the generation of a proton gradient across the mitochondrial membrane that is then used for ATP synthesis. This is Cytochrome b (mt-cyb) from Synbranchus marmoratus (Marbled swamp eel).